Here is a 57-residue protein sequence, read N- to C-terminus: Stress response protein (57 aa).

A Nuclear localization signal motif is present at residues 6 to 10; it reads RKERR.

As to expression, mesophyll protoplasts.

The protein localises to the nucleus. Stress response. May play a role in the reentering of protoplasts into the cell cycle. The sequence is that of Stress response protein from Nicotiana sylvestris (Wood tobacco).